The primary structure comprises 168 residues: Myosin regulatory light chain 11 (168 aa).

At Ala2 the chain carries N,N,N-trimethylalanine. Phosphoserine is present on Ser15. EF-hand domains follow at residues 24–59, 94–129, and 130–165; these read TQIQ…MGRL, DPED…QCDR, and FTPE…GEDK. Ca(2+) contacts are provided by Asp37, Asn39, Asp41, and Asp48.

In terms of assembly, myosin is a hexamer of 2 heavy chains and 4 light chains. The N-terminus is blocked. N,N,N-trimethylalanine, found in other myosin light chains would not have been detected in the N-terminal tryptic peptide in PubMed:7358336 because it would remain trimethylated and ninhydrin negative after hydrolysis.

Its function is as follows. Myosin regulatory subunit that plays an essential to maintain muscle integrity during early development. Plays a role in muscle contraction. This Gallus gallus (Chicken) protein is Myosin regulatory light chain 11 (MYL11).